A 543-amino-acid polypeptide reads, in one-letter code: uncharacterized protein (543 aa).

Transmembrane regions (helical) follow at residues 47–67 (FSLLAVFGQSFGSMGLCPSLV), 79–99 (GGMVWSWFVGATCLLPIAFAL), 126–146 (AFLSWFLGYVLALAYSTGFAS), 176–196 (IYVALSFACSALIVLPTKFLA), 198–218 (FSSFNVVFQICTILIFIISLA), and 249–269 (FILCFTTPVWVLSGFESCATI). The N-linked (GlcNAc...) asparagine glycan is linked to asparagine 275. 3 consecutive transmembrane segments (helical) span residues 282–302 (IAIISSLTVSLFMGFCIMITI), 335–355 (AVGVSAVLIIALCFNCSALCL), and 384–404 (IPLNAILLVNLYTIIVGLLML). Residue asparagine 406 is glycosylated (N-linked (GlcNAc...) asparagine). A run of 3 helical transmembrane segments spans residues 410 to 430 (ISSIFNLAIIAFFISYSLPLV), 452 to 472 (ISIVAVAWLWFMALMLLFPSY), and 480 to 500 (MNWAIVVLGFTVFFCVGYYYL). N-linked (GlcNAc...) asparagine glycosylation occurs at asparagine 519.

The protein belongs to the amino acid-polyamine-organocation (APC) superfamily.

The protein localises to the membrane. This is an uncharacterized protein from Schizosaccharomyces pombe (strain 972 / ATCC 24843) (Fission yeast).